An 807-amino-acid chain; its full sequence is Glycerol-3-phosphate acyltransferase (807 aa).

An HXXXXD motif motif is present at residues 308 to 313; sequence CHRSHM.

The protein belongs to the GPAT/DAPAT family.

It is found in the cell inner membrane. The catalysed reaction is sn-glycerol 3-phosphate + an acyl-CoA = a 1-acyl-sn-glycero-3-phosphate + CoA. Its pathway is phospholipid metabolism; CDP-diacylglycerol biosynthesis; CDP-diacylglycerol from sn-glycerol 3-phosphate: step 1/3. This is Glycerol-3-phosphate acyltransferase from Shewanella baltica (strain OS155 / ATCC BAA-1091).